The chain runs to 215 residues: Cytochrome b6 (215 aa).

A helical membrane pass occupies residues 32–52 (IFYCLGGITFTCFLVQVATGF). Residue cysteine 35 coordinates heme c. The heme b site is built by histidine 86 and histidine 100. Transmembrane regions (helical) follow at residues 90–110 (ASMM…TGGF), 116–136 (LTWT…VTGY), and 186–206 (LHTF…FLMI). Residues histidine 187 and histidine 202 each contribute to the heme b site.

The protein belongs to the cytochrome b family. PetB subfamily. In terms of assembly, the 4 large subunits of the cytochrome b6-f complex are cytochrome b6, subunit IV (17 kDa polypeptide, PetD), cytochrome f and the Rieske protein, while the 4 small subunits are PetG, PetL, PetM and PetN. The complex functions as a dimer. It depends on heme b as a cofactor. Heme c serves as cofactor.

It localises to the plastid. The protein localises to the chloroplast thylakoid membrane. In terms of biological role, component of the cytochrome b6-f complex, which mediates electron transfer between photosystem II (PSII) and photosystem I (PSI), cyclic electron flow around PSI, and state transitions. The polypeptide is Cytochrome b6 (Stigeoclonium helveticum (Green alga)).